We begin with the raw amino-acid sequence, 428 residues long: Leucine-rich repeat-containing protein 42 (428 aa).

5 LRR repeats span residues 149–170 (VLCS…EEIK), 174–195 (ELTC…LEHL), 202–222 (SVTQ…RKMT), 234–255 (NLTL…GYLF), and 259–280 (KLNC…KHKL). The segment at 379 to 412 (KHEAISSQESKKSKKRPFEESETEQNNSSQPSKQ) is disordered. Phosphoserine occurs at positions 406 and 407.

Belongs to the LRRC42 family.

The chain is Leucine-rich repeat-containing protein 42 (LRRC42) from Homo sapiens (Human).